Consider the following 507-residue polypeptide: Histidine ammonia-lyase (507 aa).

Residues 143 to 145 constitute a cross-link (5-imidazolinone (Ala-Gly)); it reads ASG. 2,3-didehydroalanine (Ser) is present on serine 144.

This sequence belongs to the PAL/histidase family. In terms of processing, contains an active site 4-methylidene-imidazol-5-one (MIO), which is formed autocatalytically by cyclization and dehydration of residues Ala-Ser-Gly.

Its subcellular location is the cytoplasm. The catalysed reaction is L-histidine = trans-urocanate + NH4(+). It participates in amino-acid degradation; L-histidine degradation into L-glutamate; N-formimidoyl-L-glutamate from L-histidine: step 1/3. This chain is Histidine ammonia-lyase, found in Alkaliphilus oremlandii (strain OhILAs) (Clostridium oremlandii (strain OhILAs)).